Reading from the N-terminus, the 521-residue chain is (+)-kolavenyl diphosphate synthase (521 aa).

The Mg(2+) site is built by Asp311 and Asp313. The short motif at 311–314 is the DXDD motif element; sequence DGDD.

The protein belongs to the terpene synthase family. Requires Mg(2+) as cofactor.

The enzyme catalyses (2E,6E,10E)-geranylgeranyl diphosphate = (+)-kolavenyl diphosphate. Involved in the biosynthesis of (+)-O-methylkolavelool. Catalyzes the conversion of geranylgeranyl diphosphate into (+)-kolavenyl diphosphate. The sequence is that of (+)-kolavenyl diphosphate synthase from Herpetosiphon aurantiacus (strain ATCC 23779 / DSM 785 / 114-95).